The sequence spans 249 residues: Coproheme decarboxylase (249 aa).

Residues Arg-131, 145-149 (YPMDK), His-172, and Gln-185 each bind Fe-coproporphyrin III. The active site involves Tyr-145.

This sequence belongs to the ChdC family. Type 1 subfamily. The cofactor is Fe-coproporphyrin III.

It carries out the reaction Fe-coproporphyrin III + 2 H2O2 + 2 H(+) = heme b + 2 CO2 + 4 H2O. The enzyme catalyses Fe-coproporphyrin III + H2O2 + H(+) = harderoheme III + CO2 + 2 H2O. It catalyses the reaction harderoheme III + H2O2 + H(+) = heme b + CO2 + 2 H2O. It functions in the pathway porphyrin-containing compound metabolism; protoheme biosynthesis. Functionally, involved in coproporphyrin-dependent heme b biosynthesis. Catalyzes the decarboxylation of Fe-coproporphyrin III (coproheme) to heme b (protoheme IX), the last step of the pathway. The reaction occurs in a stepwise manner with a three-propionate intermediate. The sequence is that of Coproheme decarboxylase from Staphylococcus epidermidis (strain ATCC 35984 / DSM 28319 / BCRC 17069 / CCUG 31568 / BM 3577 / RP62A).